The following is a 417-amino-acid chain: Serine hydroxymethyltransferase (417 aa).

(6S)-5,6,7,8-tetrahydrofolate-binding positions include Leu-121 and 125-127 (GHL). At Lys-230 the chain carries N6-(pyridoxal phosphate)lysine. A (6S)-5,6,7,8-tetrahydrofolate-binding site is contributed by 355 to 357 (SPF).

It belongs to the SHMT family. In terms of assembly, homodimer. Pyridoxal 5'-phosphate is required as a cofactor.

The protein resides in the cytoplasm. It catalyses the reaction (6R)-5,10-methylene-5,6,7,8-tetrahydrofolate + glycine + H2O = (6S)-5,6,7,8-tetrahydrofolate + L-serine. It functions in the pathway one-carbon metabolism; tetrahydrofolate interconversion. It participates in amino-acid biosynthesis; glycine biosynthesis; glycine from L-serine: step 1/1. Functionally, catalyzes the reversible interconversion of serine and glycine with tetrahydrofolate (THF) serving as the one-carbon carrier. This reaction serves as the major source of one-carbon groups required for the biosynthesis of purines, thymidylate, methionine, and other important biomolecules. Also exhibits THF-independent aldolase activity toward beta-hydroxyamino acids, producing glycine and aldehydes, via a retro-aldol mechanism. In Nitrosococcus oceani (strain ATCC 19707 / BCRC 17464 / JCM 30415 / NCIMB 11848 / C-107), this protein is Serine hydroxymethyltransferase.